A 134-amino-acid polypeptide reads, in one-letter code: ATP synthase epsilon chain (134 aa).

Belongs to the ATPase epsilon chain family. In terms of assembly, F-type ATPases have 2 components, CF(1) - the catalytic core - and CF(0) - the membrane proton channel. CF(1) has five subunits: alpha(3), beta(3), gamma(1), delta(1), epsilon(1). CF(0) has three main subunits: a, b and c.

Its subcellular location is the cellular thylakoid membrane. Functionally, produces ATP from ADP in the presence of a proton gradient across the membrane. The chain is ATP synthase epsilon chain from Prochlorococcus marinus (strain MIT 9215).